Here is a 150-residue protein sequence, read N- to C-terminus: 6,7-dimethyl-8-ribityllumazine synthase (150 aa).

Residues F11, 42-44, and 73-75 contribute to the 5-amino-6-(D-ribitylamino)uracil site; these read IFE and CAI. (2S)-2-hydroxy-3-oxobutyl phosphate is bound at residue 78–79; it reads ES. H81 (proton donor) is an active-site residue. N106 serves as a coordination point for 5-amino-6-(D-ribitylamino)uracil. (2S)-2-hydroxy-3-oxobutyl phosphate is bound at residue R120.

The protein belongs to the DMRL synthase family.

The catalysed reaction is (2S)-2-hydroxy-3-oxobutyl phosphate + 5-amino-6-(D-ribitylamino)uracil = 6,7-dimethyl-8-(1-D-ribityl)lumazine + phosphate + 2 H2O + H(+). It functions in the pathway cofactor biosynthesis; riboflavin biosynthesis; riboflavin from 2-hydroxy-3-oxobutyl phosphate and 5-amino-6-(D-ribitylamino)uracil: step 1/2. Catalyzes the formation of 6,7-dimethyl-8-ribityllumazine by condensation of 5-amino-6-(D-ribitylamino)uracil with 3,4-dihydroxy-2-butanone 4-phosphate. This is the penultimate step in the biosynthesis of riboflavin. In Paramagnetospirillum magneticum (strain ATCC 700264 / AMB-1) (Magnetospirillum magneticum), this protein is 6,7-dimethyl-8-ribityllumazine synthase.